Here is a 1155-residue protein sequence, read N- to C-terminus: DNA-directed RNA polymerase subunit beta (1155 aa).

Belongs to the RNA polymerase beta chain family. In terms of assembly, the RNAP catalytic core consists of 2 alpha, 1 beta, 1 beta' and 1 omega subunit. When a sigma factor is associated with the core the holoenzyme is formed, which can initiate transcription.

It catalyses the reaction RNA(n) + a ribonucleoside 5'-triphosphate = RNA(n+1) + diphosphate. Its function is as follows. DNA-dependent RNA polymerase catalyzes the transcription of DNA into RNA using the four ribonucleoside triphosphates as substrates. The polypeptide is DNA-directed RNA polymerase subunit beta (Borrelia turicatae (strain 91E135)).